Here is a 335-residue protein sequence, read N- to C-terminus: uncharacterized protein (335 aa).

Transmembrane regions (helical) follow at residues 104-124 (FKKV…MGLL), 128-148 (LLQG…LSLF), 280-300 (LAFG…TMIG), and 310-330 (TINL…GIFV).

It is found in the cell membrane. This is an uncharacterized protein from Methanocaldococcus jannaschii (strain ATCC 43067 / DSM 2661 / JAL-1 / JCM 10045 / NBRC 100440) (Methanococcus jannaschii).